A 122-amino-acid chain; its full sequence is Large ribosomal subunit protein uL14 (122 aa).

This sequence belongs to the universal ribosomal protein uL14 family. As to quaternary structure, part of the 50S ribosomal subunit. Forms a cluster with proteins L3 and L19. In the 70S ribosome, L14 and L19 interact and together make contacts with the 16S rRNA in bridges B5 and B8.

Its function is as follows. Binds to 23S rRNA. Forms part of two intersubunit bridges in the 70S ribosome. This is Large ribosomal subunit protein uL14 from Frankia alni (strain DSM 45986 / CECT 9034 / ACN14a).